Consider the following 322-residue polypeptide: Phospho-N-acetylmuramoyl-pentapeptide-transferase (322 aa).

10 consecutive transmembrane segments (helical) span residues 9–29, 54–74, 82–102, 122–142, 145–165, 176–196, 200–220, 227–247, 255–275, and 302–322; these read IALVSSLVLTVIFLPVLINFM, TMGGTIFVIAAVISVIWVAAW, VWILVISLLGYGIIGFLDDGI, IIIAVVIVLIASSDHFQFGLY, FAGVVHSIALFTIFIIFWLVG, LDGLATGLSIVAYGTYAYIAF, NFAVLAFCMSVIGGLIAFFIF, IFMGDAGSLALGGGLATVSIM, LLIGIVFVCETASVILQVISF, and VDIVFWLVGLICSILYLAIWG.

This sequence belongs to the glycosyltransferase 4 family. MraY subfamily. The cofactor is Mg(2+).

The protein resides in the cell membrane. It carries out the reaction UDP-N-acetyl-alpha-D-muramoyl-L-alanyl-gamma-D-glutamyl-L-lysyl-D-alanyl-D-alanine + di-trans,octa-cis-undecaprenyl phosphate = Mur2Ac(oyl-L-Ala-gamma-D-Glu-L-Lys-D-Ala-D-Ala)-di-trans,octa-cis-undecaprenyl diphosphate + UMP. It functions in the pathway cell wall biogenesis; peptidoglycan biosynthesis. In terms of biological role, catalyzes the initial step of the lipid cycle reactions in the biosynthesis of the cell wall peptidoglycan: transfers peptidoglycan precursor phospho-MurNAc-pentapeptide from UDP-MurNAc-pentapeptide onto the lipid carrier undecaprenyl phosphate, yielding undecaprenyl-pyrophosphoryl-MurNAc-pentapeptide, known as lipid I. This is Phospho-N-acetylmuramoyl-pentapeptide-transferase from Lactobacillus acidophilus (strain ATCC 700396 / NCK56 / N2 / NCFM).